Reading from the N-terminus, the 605-residue chain is Sulfite reductase [NADPH] flavoprotein alpha-component (605 aa).

A Flavodoxin-like domain is found at 68-206; that stretch reads VTVLYGSQTG…PAAEWLEGVL (139 aa). FMN is bound by residues 74-78, 121-126, and 154-185; these read SQTGN, STHGEG, and VLAL…KRIS. Residues 213–234 are disordered; sequence GGGSAAPAPAAASQTGESSYSR. The FAD-binding FR-type domain occupies 235 to 454; sequence TNPFRAEVLE…VQHNQNFKLP (220 aa). 392–395 is a binding site for FAD; sequence RLYS. NADP(+) is bound by residues D495 and 525 to 533; that span reads SRDTEEKVY.

As to quaternary structure, alpha(8)-beta(8). The alpha component is a flavoprotein, the beta component is a hemoprotein. FAD serves as cofactor. It depends on FMN as a cofactor.

The catalysed reaction is hydrogen sulfide + 3 NADP(+) + 3 H2O = sulfite + 3 NADPH + 4 H(+). The protein operates within sulfur metabolism; hydrogen sulfide biosynthesis; hydrogen sulfide from sulfite (NADPH route): step 1/1. Component of the sulfite reductase complex that catalyzes the 6-electron reduction of sulfite to sulfide. This is one of several activities required for the biosynthesis of L-cysteine from sulfate. The flavoprotein component catalyzes the electron flow from NADPH -&gt; FAD -&gt; FMN to the hemoprotein component. This chain is Sulfite reductase [NADPH] flavoprotein alpha-component (cysJ), found in Bacillus subtilis (strain 168).